Reading from the N-terminus, the 160-residue chain is S-adenosylmethionine decarboxylase proenzyme (160 aa).

Ser73 functions as the Schiff-base intermediate with substrate; via pyruvic acid in the catalytic mechanism. Ser73 carries the pyruvic acid (Ser); by autocatalysis modification. His78 acts as the Proton acceptor; for processing activity in catalysis. Residue Cys93 is the Proton donor; for catalytic activity of the active site.

This sequence belongs to the prokaryotic AdoMetDC family. Type 1 subfamily. Heterotetramer of two alpha and two beta chains arranged as a dimer of alpha/beta heterodimers. Pyruvate is required as a cofactor. Post-translationally, is synthesized initially as an inactive proenzyme. Formation of the active enzyme involves a self-maturation process in which the active site pyruvoyl group is generated from an internal serine residue via an autocatalytic post-translational modification. Two non-identical subunits are generated from the proenzyme in this reaction, and the pyruvate is formed at the N-terminus of the alpha chain, which is derived from the carboxyl end of the proenzyme. The post-translation cleavage follows an unusual pathway, termed non-hydrolytic serinolysis, in which the side chain hydroxyl group of the serine supplies its oxygen atom to form the C-terminus of the beta chain, while the remainder of the serine residue undergoes an oxidative deamination to produce ammonia and the pyruvoyl group blocking the N-terminus of the alpha chain.

It catalyses the reaction S-adenosyl-L-methionine + H(+) = S-adenosyl 3-(methylsulfanyl)propylamine + CO2. Its pathway is amine and polyamine biosynthesis; S-adenosylmethioninamine biosynthesis; S-adenosylmethioninamine from S-adenosyl-L-methionine: step 1/1. Catalyzes the decarboxylation of S-adenosylmethionine to S-adenosylmethioninamine (dcAdoMet), the propylamine donor required for the synthesis of the polyamines spermine and spermidine from the diamine putrescine. This chain is S-adenosylmethionine decarboxylase proenzyme, found in Pseudomonas paraeruginosa (strain DSM 24068 / PA7) (Pseudomonas aeruginosa (strain PA7)).